Reading from the N-terminus, the 697-residue chain is Semaphorin-2A (697 aa).

The first 20 residues, 1–20 (MAAKLWNLLLVAASVHLVGS), serve as a signal peptide directing secretion. Residues 21–493 (VEQLHQDLIH…SDNIVRQIEL (473 aa)) form the Sema domain. 2 N-linked (GlcNAc...) asparagine glycosylation sites follow: asparagine 63 and asparagine 66. An intrachain disulfide couples cysteine 87 to cysteine 98. N-linked (GlcNAc...) asparagine glycans are attached at residues asparagine 132, asparagine 198, and asparagine 283. 2 disulfide bridges follow: cysteine 260–cysteine 367 and cysteine 284–cysteine 326. Residue asparagine 369 is glycosylated (N-linked (GlcNAc...) asparagine). Intrachain disulfides connect cysteine 496–cysteine 512 and cysteine 506–cysteine 521. Residues 526-634 (PGLLQDVTNT…LCSYNITVDA (109 aa)) enclose the Ig-like C2-type domain. Asparagine 534, asparagine 629, and asparagine 679 each carry an N-linked (GlcNAc...) asparagine glycan. Cysteines 618 and 654 form a disulfide. Positions 673 to 685 (QCSTKQNNSNQKT) are enriched in polar residues. The segment at 673 to 697 (QCSTKQNNSNQKTHPNDIFHSNPVA) is disordered.

It belongs to the semaphorin family. Expressed in a gradient in the developing limb bud epithelium during Ti pioneer axon outgrowth.

It is found in the secreted. Its function is as follows. Acts as a chemorepulsive guidance molecule critical for axon fasciculation and for determining both the initial direction and subsequent pathfinding events of the Ti axon projection. This is Semaphorin-2A (SEMA-2A) from Schistocerca gregaria (Desert locust).